The sequence spans 191 residues: Protein DMP10 (191 aa).

Transmembrane regions (helical) follow at residues Phe15–Ser35, Leu48–Asp68, Leu114–Val134, and Leu158–Phe178.

Belongs to the plant DMP1 protein family. As to expression, restricted to flowers.

The protein resides in the membrane. Functionally, involved in membrane remodeling. This Arabidopsis thaliana (Mouse-ear cress) protein is Protein DMP10.